Reading from the N-terminus, the 457-residue chain is Dihydrolipoyl dehydrogenase (457 aa).

FAD is bound by residues 32–40 (EKEYFGGVC), Lys-49, and Ala-113. Cys-40 and Cys-45 are oxidised to a cystine. NAD(+) is bound by residues 178 to 182 (GGGVI), Val-235, and 262 to 265 (SIGR). The FAD site is built by Asp-303 and Ala-311. His-437 acts as the Proton acceptor in catalysis.

The protein belongs to the class-I pyridine nucleotide-disulfide oxidoreductase family. In terms of assembly, homodimer. FAD is required as a cofactor.

It localises to the cytoplasm. The enzyme catalyses N(6)-[(R)-dihydrolipoyl]-L-lysyl-[protein] + NAD(+) = N(6)-[(R)-lipoyl]-L-lysyl-[protein] + NADH + H(+). Functionally, lipoamide dehydrogenase is a component of the alpha-ketoacid dehydrogenase complexes. This is Dihydrolipoyl dehydrogenase (pdhD) from Mycoplasma pneumoniae (strain ATCC 29342 / M129 / Subtype 1) (Mycoplasmoides pneumoniae).